The sequence spans 145 residues: Peptidyl-lysine N-acetyltransferase YjaB (145 aa).

One can recognise an N-acetyltransferase domain in the interval I3–Y144.

The protein belongs to the acetyltransferase family.

It carries out the reaction L-lysyl-[protein] + acetyl-CoA = N(6)-acetyl-L-lysyl-[protein] + CoA + H(+). N-epsilon-lysine acetyltransferase that catalyzes acetylation of a large number of proteins. In Salmonella typhimurium (strain LT2 / SGSC1412 / ATCC 700720), this protein is Peptidyl-lysine N-acetyltransferase YjaB (yjaB).